A 358-amino-acid chain; its full sequence is Diels-Alderase phmD (358 aa).

Belongs to the Diels-Alderase family.

It participates in mycotoxin biosynthesis. In terms of biological role, diels-Alderase; part of the gene cluster that mediates the biosynthesis of the mycotoxins phomacins, leucine-derived cytochalasans with potent actin polymerization-inhibitory activities and monocot-specific antigerminative activities. The first step in the pathway is catalyzed by the hybrid PKS-NRPS phmA, assisted by the enoyl reductase phmE, that are responsible for fusion of the leucine precursor and the polyketide backbone to produce a 2-pyrrolidone intermediate. The polyketide synthase module (PKS) of phmA is responsible for the synthesis of the polyketide backbone and the downstream nonribosomal peptide synthetase (NRPS) amidates the carboxyl end of the polyketide with the leucine precursor. Because phmA lacks a designated enoylreductase (ER) domain, the required activity is provided the enoyl reductase phmE. Reduction by the hydrolyase phmG, followed by dehydration and intra-molecular Diels-Alder cyclization by the Diels-Alderase phmD then yield the required isoindolone-fused macrocycle. A number of oxidative steps catalyzed by the tailoring cytochrome P450 monooxygenase phmB, the FAD-linked oxidoreductase phmC and the short-chain dehydrogenase/reductase phmF, are further required to afford the final products, phomacin D and phomacin E. In Phaeosphaeria nodorum (strain SN15 / ATCC MYA-4574 / FGSC 10173) (Glume blotch fungus), this protein is Diels-Alderase phmD.